The following is a 296-amino-acid chain: UDP-N-acetylenolpyruvoylglucosamine reductase (296 aa).

The FAD-binding PCMH-type domain occupies 26–191; sequence RIGGPANYFK…LSATFRLSRN (166 aa). Residue arginine 170 is part of the active site. The active-site Proton donor is the cysteine 218. Glutamate 287 is an active-site residue.

This sequence belongs to the MurB family. FAD is required as a cofactor.

The protein resides in the cytoplasm. It catalyses the reaction UDP-N-acetyl-alpha-D-muramate + NADP(+) = UDP-N-acetyl-3-O-(1-carboxyvinyl)-alpha-D-glucosamine + NADPH + H(+). Its pathway is cell wall biogenesis; peptidoglycan biosynthesis. Functionally, cell wall formation. The chain is UDP-N-acetylenolpyruvoylglucosamine reductase from Chlamydia abortus (strain DSM 27085 / S26/3) (Chlamydophila abortus).